The sequence spans 519 residues: Cilia- and flagella-associated protein 53 (519 aa).

Coiled coils occupy residues 80–107 (NRHLQDALDQYQMGIDEKRERLRELLES) and 210–339 (LAKE…QEEQ). The tract at residues 498–519 (TTAVHPFRRRDRRCSSSGGQMS) is disordered.

This sequence belongs to the CFAP53 family.

Its subcellular location is the cytoplasm. The protein localises to the cytoskeleton. It is found in the cilium axoneme. It localises to the cilium basal body. Its function is as follows. Microtubule inner protein (MIP) part of the dynein-decorated doublet microtubules (DMTs) in cilia axoneme, which is required for motile cilia beating. Regulates motility patterns of both 9+0 and 9+2 motile cilia through differential localization and recruitment of axonemal dynein components. Required for cilium motility within the spinal canal and Kuppfer's vesicle and is involved in the establishment of left-right symmetry during embryogenesis. This is Cilia- and flagella-associated protein 53 from Danio rerio (Zebrafish).